Consider the following 500-residue polypeptide: Lysine--tRNA ligase (500 aa).

The Mg(2+) site is built by E410 and E417.

Belongs to the class-II aminoacyl-tRNA synthetase family. In terms of assembly, homodimer. Mg(2+) is required as a cofactor.

It localises to the cytoplasm. The enzyme catalyses tRNA(Lys) + L-lysine + ATP = L-lysyl-tRNA(Lys) + AMP + diphosphate. This is Lysine--tRNA ligase from Pseudomonas fluorescens (strain ATCC BAA-477 / NRRL B-23932 / Pf-5).